The sequence spans 453 residues: UDP-glycosyltransferase 76E1 (453 aa).

Residues serine 272, 331-333 (APQ), 348-356 (HCGWNSTLE), and 370-373 (TGDQ) each bind UDP-alpha-D-glucose.

The protein belongs to the UDP-glycosyltransferase family.

Possesses low quercetin 3-O-glucosyltransferase and 7-O-glucosyltransferase activities in vitro. This is UDP-glycosyltransferase 76E1 (UGT76E1) from Arabidopsis thaliana (Mouse-ear cress).